The chain runs to 221 residues: Small ribosomal subunit protein uS5 (221 aa).

The disordered stretch occupies residues 1-40 (MMAQRNSGAPDNAGGSNDGREGGRGRRDNRDDRRGGRDNA). A compositionally biased stretch (basic and acidic residues) spans 18–40 (DGREGGRGRRDNRDDRRGGRDNA). An S5 DRBM domain is found at 45-108 (YLERVVTINR…DEARKNFFRV (64 aa)).

The protein belongs to the universal ribosomal protein uS5 family. As to quaternary structure, part of the 30S ribosomal subunit. Contacts proteins S4 and S8.

With S4 and S12 plays an important role in translational accuracy. Functionally, located at the back of the 30S subunit body where it stabilizes the conformation of the head with respect to the body. The chain is Small ribosomal subunit protein uS5 from Mycobacteroides abscessus (strain ATCC 19977 / DSM 44196 / CCUG 20993 / CIP 104536 / JCM 13569 / NCTC 13031 / TMC 1543 / L948) (Mycobacterium abscessus).